A 300-amino-acid chain; its full sequence is Protoheme IX farnesyltransferase 1 (300 aa).

Transmembrane regions (helical) follow at residues 28–48 (VVAL…PTIL), 54–74 (VAGL…NHLI), 100–120 (ALLF…VFTN), 122–142 (LTAW…TAYL), 149–169 (NIVI…TAVT), 176–196 (ALLL…ALAI), 222–242 (CILL…LVGM), 243–263 (SGPL…YKAW), and 280–300 (FSIY…YLWA).

This sequence belongs to the UbiA prenyltransferase family. Protoheme IX farnesyltransferase subfamily.

It localises to the cell inner membrane. The catalysed reaction is heme b + (2E,6E)-farnesyl diphosphate + H2O = Fe(II)-heme o + diphosphate. Its pathway is porphyrin-containing compound metabolism; heme O biosynthesis; heme O from protoheme: step 1/1. Converts heme B (protoheme IX) to heme O by substitution of the vinyl group on carbon 2 of heme B porphyrin ring with a hydroxyethyl farnesyl side group. This chain is Protoheme IX farnesyltransferase 1, found in Shewanella sp. (strain MR-4).